Reading from the N-terminus, the 101-residue chain is Interleukin-8 (101 aa).

The signal sequence occupies residues 1-22 (MTSKLAVALLAAFLLSAALCEA). Arginine 27 is modified (citrulline). 2 disulfides stabilise this stretch: cysteine 34-cysteine 61 and cysteine 36-cysteine 77.

This sequence belongs to the intercrine alpha (chemokine CxC) family. Homodimer. Interacts with TNFAIP6 (via Link domain); this interaction interferes with chemokine binding to glycosaminoglycans. Citrullination at Arg-27 prevents proteolysis, and dampens tissue inflammation, it also enhances leukocytosis, possibly through impaired chemokine clearance from the blood circulation.

The protein resides in the secreted. Functionally, chemotactic factor that mediates inflammatory response by attracting neutrophils, basophils, and T-cells to clear pathogens and protect the host from infection. Also plays an important role in neutrophil activation. Released in response to an inflammatory stimulus, exerts its effect by binding to the G-protein-coupled receptors CXCR1 and CXCR2, primarily found in neutrophils, monocytes and endothelial cells. G-protein heterotrimer (alpha, beta, gamma subunits) constitutively binds to CXCR1/CXCR2 receptor and activation by IL8 leads to beta and gamma subunits release from Galpha (GNAI2 in neutrophils) and activation of several downstream signaling pathways including PI3K and MAPK pathways. In Ovis aries (Sheep), this protein is Interleukin-8 (CXCL8).